Consider the following 424-residue polypeptide: Elongator complex protein 4 (424 aa).

It belongs to the ELP4 family. In terms of assembly, component of the elongator complex which consists of ELP1, ELP2, ELP3, ELP4, ELP5 and ELP6. Widely expressed.

The protein resides in the cytoplasm. It is found in the nucleus. Its pathway is tRNA modification; 5-methoxycarbonylmethyl-2-thiouridine-tRNA biosynthesis. Component of the elongator complex which is required for multiple tRNA modifications, including mcm5U (5-methoxycarbonylmethyl uridine), mcm5s2U (5-methoxycarbonylmethyl-2-thiouridine), and ncm5U (5-carbamoylmethyl uridine). The elongator complex catalyzes the formation of carboxymethyluridine in the wobble base at position 34 in tRNAs. The chain is Elongator complex protein 4 (ELP4) from Homo sapiens (Human).